Here is a 313-residue protein sequence, read N- to C-terminus: Ribosomal RNA small subunit methyltransferase H (313 aa).

S-adenosyl-L-methionine-binding positions include 35–37 (GGH), Asp-55, Phe-80, Asp-102, and Gln-109.

Belongs to the methyltransferase superfamily. RsmH family.

The protein localises to the cytoplasm. The catalysed reaction is cytidine(1402) in 16S rRNA + S-adenosyl-L-methionine = N(4)-methylcytidine(1402) in 16S rRNA + S-adenosyl-L-homocysteine + H(+). Specifically methylates the N4 position of cytidine in position 1402 (C1402) of 16S rRNA. This chain is Ribosomal RNA small subunit methyltransferase H, found in Shewanella oneidensis (strain ATCC 700550 / JCM 31522 / CIP 106686 / LMG 19005 / NCIMB 14063 / MR-1).